A 170-amino-acid chain; its full sequence is Transcriptional repressor NrdR (170 aa).

A zinc finger spans residues 3 to 34 (CPFCRHPDSRVVDSRTSEDGSSIRRRRQCPEC). The ATP-cone domain occupies 46 to 136 (LSVVKRSGVA…VYRGFSSLED (91 aa)). Positions 148–170 (RENEGDPDADGSADAPVRLTTSV) are disordered.

The protein belongs to the NrdR family. The cofactor is Zn(2+).

Functionally, negatively regulates transcription of bacterial ribonucleotide reductase nrd genes and operons by binding to NrdR-boxes. This chain is Transcriptional repressor NrdR, found in Beutenbergia cavernae (strain ATCC BAA-8 / DSM 12333 / CCUG 43141 / JCM 11478 / NBRC 16432 / NCIMB 13614 / HKI 0122).